We begin with the raw amino-acid sequence, 180 residues long: Bifunctional protein PyrR (180 aa).

Substrate-binding positions include 39–40 (TR), 103–111 (DDVLYTGRT), and arginine 136. A PRPP-binding motif is present at residues 99–111 (VILIDDVLYTGRT).

The protein belongs to the purine/pyrimidine phosphoribosyltransferase family. PyrR subfamily. As to quaternary structure, homodimer and homohexamer; in equilibrium.

It carries out the reaction UMP + diphosphate = 5-phospho-alpha-D-ribose 1-diphosphate + uracil. Its function is as follows. Regulates transcriptional attenuation of the pyrimidine nucleotide (pyr) operon by binding in a uridine-dependent manner to specific sites on pyr mRNA. This disrupts an antiterminator hairpin in the RNA and favors formation of a downstream transcription terminator, leading to a reduced expression of downstream genes. Also displays a weak uracil phosphoribosyltransferase activity which is not physiologically significant. The chain is Bifunctional protein PyrR from Halalkalibacterium halodurans (strain ATCC BAA-125 / DSM 18197 / FERM 7344 / JCM 9153 / C-125) (Bacillus halodurans).